The chain runs to 540 residues: Chaperonin GroEL 4 (540 aa).

ATP contacts are provided by residues Thr-29–Pro-32, Asp-86–Thr-90, Gly-413, Asn-477–Ala-479, and Asp-493.

Belongs to the chaperonin (HSP60) family. As to quaternary structure, forms a cylinder of 14 subunits composed of two heptameric rings stacked back-to-back. Interacts with the co-chaperonin GroES.

It localises to the cytoplasm. It catalyses the reaction ATP + H2O + a folded polypeptide = ADP + phosphate + an unfolded polypeptide.. Functionally, together with its co-chaperonin GroES, plays an essential role in assisting protein folding. The GroEL-GroES system forms a nano-cage that allows encapsulation of the non-native substrate proteins and provides a physical environment optimized to promote and accelerate protein folding. The protein is Chaperonin GroEL 4 of Frankia alni (strain DSM 45986 / CECT 9034 / ACN14a).